The following is a 311-amino-acid chain: MSYQDLKECKIITAFITPFHEDGSINFDAIPALIEHLLDHHTDGILLAGTTAESPTLTHDEELELFAAVQKIVNGRVPLIAGVGTNDTRDSIEFVKEVAEFGGFAAGLAIVPYYNKPSQEGMYQHFKAIADASDLPIIIYNIPGRVVVELTPETMLRLADHPNIIGVKECTSLANMAYLIEHKPEEFLVYTGEDGDAFHAMNLGADGVISVASHTNGDEMHEMFTAIAESDMKKAAAIQRKFIPKVNALFSYPSPAPVKAVLNYMGFEAGPTRLPLVPAPEEDAKRIIKVVVDGDYEATKATVTGVLRPDY.

Position 51 (T51) interacts with pyruvate. Residue Y140 is the Proton donor/acceptor of the active site. The active-site Schiff-base intermediate with substrate is K168. Position 209 (I209) interacts with pyruvate.

It belongs to the DapA family. Homotetramer; dimer of dimers.

The protein resides in the cytoplasm. The catalysed reaction is L-aspartate 4-semialdehyde + pyruvate = (2S,4S)-4-hydroxy-2,3,4,5-tetrahydrodipicolinate + H2O + H(+). The protein operates within amino-acid biosynthesis; L-lysine biosynthesis via DAP pathway; (S)-tetrahydrodipicolinate from L-aspartate: step 3/4. In terms of biological role, catalyzes the condensation of (S)-aspartate-beta-semialdehyde [(S)-ASA] and pyruvate to 4-hydroxy-tetrahydrodipicolinate (HTPA). The polypeptide is 4-hydroxy-tetrahydrodipicolinate synthase (Streptococcus pneumoniae (strain CGSP14)).